The following is a 147-amino-acid chain: Protein MC014 (147 aa).

Its subcellular location is the host nucleus. The polypeptide is Protein MC014 (MC014) (Homo sapiens (Human)).